The following is a 1868-amino-acid chain: Protein TIC 214 (1868 aa).

A run of 6 helical transmembrane segments spans residues 11–31, 64–84, 87–107, 126–146, 166–186, and 221–241; these read LLLLWMNIVNSVVLVGLYYGF, FIMGQFIIFISTYYPPLHLAL, PHTLTVLVLPYLLLHFLFFWN, LSIQYVFLNNLIFQLFNHFIL, ILFVISSFFGWLIGHILLMKS, and IFSILLFITCVCYLGRMPSPI. Positions 248–276 are enriched in basic and acidic residues; the sequence is ESSKGEEKKKTEKERDVEMETISKTKKIE. 5 disordered regions span residues 248–277, 617–643, 658–700, 782–806, and 1537–1607; these read ESSKGEEKKKTEKERDVEMETISKTKKIEQ, FDFEEEEEEEEEEDDEEEPTDDHGIRS, DEDT…QAEE, TSDYAGEGAKEEEHEEEKREYKRKE, and YIDP…RKKK. Residues 617–636 show a composition bias toward acidic residues; the sequence is FDFEEEEEEEEEEDDEEEPT. A compositionally biased stretch (polar residues) spans 674–683; it reads AKNSDQAKNS. 3 stretches are compositionally biased toward basic and acidic residues: residues 684 to 700, 789 to 806, and 1537 to 1576; these read DQAKKSDQAKNSDQAEE, GAKEEEHEEEKREYKRKE, and YIDPKVKSNQKERSNPKAESNQKEYLELENRNRDEKERQH.

This sequence belongs to the TIC214 family. In terms of assembly, part of the Tic complex.

It is found in the plastid. The protein resides in the chloroplast inner membrane. Its function is as follows. Involved in protein precursor import into chloroplasts. May be part of an intermediate translocation complex acting as a protein-conducting channel at the inner envelope. The chain is Protein TIC 214 from Nuphar advena (Common spatterdock).